We begin with the raw amino-acid sequence, 207 residues long: Ras-related protein Rab-8A (207 aa).

GTP contacts are provided by Ser-17, Gly-18, Val-19, Gly-20, Lys-21, Thr-22, Cys-23, Ser-35, Ser-39, and Thr-40. Thr-22 lines the Mg(2+) pocket. Short sequence motifs (switch) lie at residues Asp-31–Phe-45 and Asp-63–Gly-80. Mg(2+)-binding residues include Thr-40 and Asp-63. Gly-66 contributes to the GTP binding site. Thr-72 bears the Phosphothreonine; by LRRK2 mark. Residues Asn-121, Lys-122, Asp-124, Ala-152, and Lys-153 each contribute to the GTP site. 2 positions are modified to phosphoserine: Ser-181 and Ser-185. Cys-204 bears the Cysteine methyl ester mark. Cys-204 is lipidated: S-geranylgeranyl cysteine. A propeptide spans Ser-205–Leu-207 (removed in mature form).

This sequence belongs to the small GTPase superfamily. Rab family. Interacts (GTP-bound form) with MICALL1; regulates RAB8A association with recycling endosomes. Interacts with MICALL2; competes with RAB13 and is involved in E-cadherin endocytic recycling. Interacts (GTP-bound form) with MICAL1, MICALCL, MICAL3 and EHBP1L1; two molecules of RAB8A can bind to one molecule of the effector protein; ternary complexes of RAB8A, RAB13 and either MICAL1 or EHBP1L1 are possible. Interacts (GTP-bound form) with EHBP1. Interacts with EHD1. Interacts with MAP4K2 and SYTL4. Interacts with SGSM1 and SGSM3. Interacts with RABIF, RIMS2, RPH3A and RPH3A. Interacts with OPTN. Interacts with MYO5B. Interacts with CIMAP3. Interacts with BIRC6/bruce. Interacts with OCRL. Interacts with AHI1. Interacts with DCDC1. Interacts with LRRK2; interaction facilitates phosphorylation of Thr-72. Interacts with RAB31P, GDI1, GDI2, CHM, CHML, RABGGTA, RABGGTB, TBC1D15 and INPP5B; these interactions are dependent on Thr-72 not being phosphorylated. Interacts with RILPL1 and RILPL2; these interactions are dependent on the phosphorylation of Thr-72 by LRRK2. Interacts with DZIP1; prevents inhibition by the GDP-dissociation inhibitor GDI2. Interacts with RAB3IP/Rabin8, RAB3IP functions as guanine exchange factor (GEF) towards RAB8A. Interacts (in GDP-bound form) with RPGR, RPGR functions as GEF towards RAB8A. Mg(2+) serves as cofactor. Phosphorylation of Thr-72 in the switch II region by LRRK2 prevents the association of RAB regulatory proteins, including CHM, CHML and RAB GDP dissociation inhibitors GDI1 and GDI2. Phosphorylation by LRRK2 is required for localization to stressed lysosomes.

The protein localises to the cell membrane. The protein resides in the golgi apparatus. Its subcellular location is the endosome membrane. It localises to the recycling endosome membrane. It is found in the cell projection. The protein localises to the cilium. The protein resides in the cytoplasmic vesicle. Its subcellular location is the phagosome membrane. It localises to the cytoplasm. It is found in the cytoskeleton. The protein localises to the microtubule organizing center. The protein resides in the centrosome. Its subcellular location is the centriole. It localises to the cilium basal body. It is found in the midbody. The protein localises to the lysosome. It catalyses the reaction GTP + H2O = GDP + phosphate + H(+). Regulated by guanine nucleotide exchange factors (GEFs) such as RAB3IP/Rabin8 and RPGR which promote the exchange of bound GDP for free GTP, GTPase activating proteins (GAPs) which increase the GTP hydrolysis activity, and GDP dissociation inhibitors (GDIs) which inhibit the dissociation of the nucleotide from the GTPase. Activated in response to insulin. Functionally, the small GTPases Rab are key regulators of intracellular membrane trafficking, from the formation of transport vesicles to their fusion with membranes. Rabs cycle between an inactive GDP-bound form and an active GTP-bound form that is able to recruit to membranes different sets of downstream effectors directly responsible for vesicle formation, movement, tethering and fusion. RAB8A is involved in polarized vesicular trafficking and neurotransmitter release. Together with RAB11A, RAB3IP, the exocyst complex, PARD3, PRKCI, ANXA2, CDC42 and DNMBP promotes transcytosis of PODXL to the apical membrane initiation sites (AMIS), apical surface formation and lumenogenesis. Regulates the compacted morphology of the Golgi. Together with MYO5B and RAB11A participates in epithelial cell polarization. Also involved in membrane trafficking to the cilium and ciliogenesis. Together with MICALL2, may also regulate adherens junction assembly. May play a role in insulin-induced transport to the plasma membrane of the glucose transporter GLUT4 and therefore play a role in glucose homeostasis. Involved in autophagy. Participates in the export of a subset of neosynthesized proteins through a Rab8-Rab10-Rab11-dependent endososomal export route. Targeted to and stabilized on stressed lysosomes through LRRK2 phosphorylation. Suppresses stress-induced lysosomal enlargement through EHBP1 and EHNP1L1 effector proteins. The chain is Ras-related protein Rab-8A from Mus musculus (Mouse).